We begin with the raw amino-acid sequence, 133 residues long: Putative biopolymer transport protein ExbD-like 2 (133 aa).

Topologically, residues 1 to 9 (MKKVESMNV) are cytoplasmic. The helical transmembrane segment at 10-30 (VPFIDIMLVLLVIVLTTASFV) threads the bilayer. Topologically, residues 31–133 (QTSKLPISIP…LVEDKKNQKN (103 aa)) are periplasmic.

The protein belongs to the ExbD/TolR family.

The protein localises to the cell inner membrane. The chain is Putative biopolymer transport protein ExbD-like 2 from Helicobacter pylori (strain J99 / ATCC 700824) (Campylobacter pylori J99).